The sequence spans 438 residues: Aspartate--tRNA(Asp/Asn) ligase (438 aa).

Glu-176 is an L-aspartate binding site. Residues 198-201 form an aspartate region; that stretch reads QLYK. Residue Arg-220 participates in L-aspartate binding. Residues 220–222, 228–230, and Glu-361 contribute to the ATP site; these read RAE and RHL. The Mg(2+) site is built by Glu-361 and Ser-364. Ser-364 and Arg-368 together coordinate L-aspartate. Residue 409-412 coordinates ATP; the sequence is GADR.

This sequence belongs to the class-II aminoacyl-tRNA synthetase family. Type 2 subfamily. As to quaternary structure, homodimer. It depends on Mg(2+) as a cofactor.

It is found in the cytoplasm. It carries out the reaction tRNA(Asx) + L-aspartate + ATP = L-aspartyl-tRNA(Asx) + AMP + diphosphate. Functionally, aspartyl-tRNA synthetase with relaxed tRNA specificity since it is able to aspartylate not only its cognate tRNA(Asp) but also tRNA(Asn). Reaction proceeds in two steps: L-aspartate is first activated by ATP to form Asp-AMP and then transferred to the acceptor end of tRNA(Asp/Asn). The protein is Aspartate--tRNA(Asp/Asn) ligase of Methanococcus vannielii (strain ATCC 35089 / DSM 1224 / JCM 13029 / OCM 148 / SB).